The sequence spans 114 residues: Ferredoxin (114 aa).

Residues Cys9 and Cys17 each coordinate [3Fe-4S] cluster. Cys21, Cys40, Cys43, and Cys46 together coordinate [4Fe-4S] cluster. The 30-residue stretch at 31 to 60 (RMLYINPDECVDCGACKPACRVEAIYWEGD) folds into the 4Fe-4S ferredoxin-type domain. Cys50 contributes to the [3Fe-4S] cluster binding site.

It depends on [4Fe-4S] cluster as a cofactor. Requires [3Fe-4S] cluster as cofactor.

Functionally, ferredoxins are iron-sulfur proteins that transfer electrons in a wide variety of metabolic reactions. This Mycobacterium tuberculosis (strain ATCC 25618 / H37Rv) protein is Ferredoxin (fdxA).